Here is a 107-residue protein sequence, read N- to C-terminus: uncharacterized protein (107 aa).

The segment at 86 to 107 (KRAETARLPAATPQKRTGPARG) is disordered.

This is an uncharacterized protein from Saccharomyces cerevisiae (strain ATCC 204508 / S288c) (Baker's yeast).